Reading from the N-terminus, the 268-residue chain is Mediator of RNA polymerase II transcription subunit 18 (268 aa).

The protein belongs to the Mediator complex subunit 18 family. As to quaternary structure, component of the Mediator complex.

The protein localises to the nucleus. Component of the Mediator complex, a coactivator involved in the regulated transcription of nearly all RNA polymerase II-dependent genes. Mediator functions as a bridge to convey information from gene-specific regulatory proteins to the basal RNA polymerase II transcription machinery. Mediator is recruited to promoters by direct interactions with regulatory proteins and serves as a scaffold for the assembly of a functional preinitiation complex with RNA polymerase II and the general transcription factors. This is Mediator of RNA polymerase II transcription subunit 18 (srb5) from Neosartorya fischeri (strain ATCC 1020 / DSM 3700 / CBS 544.65 / FGSC A1164 / JCM 1740 / NRRL 181 / WB 181) (Aspergillus fischerianus).